A 96-amino-acid chain; its full sequence is Protein S100-A10 (96 aa).

The segment at aspartate 62 to serine 73 is ancestral calcium site.

The protein belongs to the S-100 family. In terms of assembly, tetramer of 2 light chains (p10) and 2 heavy chains (annexin II).

Because p10 induces the dimerization of annexin II (p36), it may function as a regulator of protein phosphorylation in that the p36 monomer is the preferred target (in vitro) of tyrosine-specific kinase. The sequence is that of Protein S100-A10 (s100a10) from Xenopus laevis (African clawed frog).